The sequence spans 461 residues: Tubulin gamma chain (461 aa).

Position 142–148 (142–148 (AGGTGSG)) interacts with GTP.

The protein belongs to the tubulin family.

The protein resides in the cytoplasm. The protein localises to the cytoskeleton. Its subcellular location is the microtubule organizing center. It localises to the spindle pole body. Its function is as follows. Tubulin is the major constituent of microtubules. The gamma chain is found at microtubule organizing centers (MTOC) such as the spindle poles or the centrosome, suggesting that it is involved in the minus-end nucleation of microtubule assembly. The chain is Tubulin gamma chain (tbg) from Neurospora crassa (strain ATCC 24698 / 74-OR23-1A / CBS 708.71 / DSM 1257 / FGSC 987).